A 147-amino-acid chain; its full sequence is MFLNGNCLETLKKKEPEGGRRRLSHPGNMGWMRPSQETTPPDRSHHSGFGLFCGDPGPEIEPFSLWVFPQEMVLEIHQLFMDHEYPCHHITSHCTWVAAHWTTSQSCAAWQGCRRACCSTWWKSPAQCTRPTVMSATFETAQEPGPS.

Residues 14–47 (KEPEGGRRRLSHPGNMGWMRPSQETTPPDRSHHS) are disordered.

The sequence is that of Putative protein CLUHP3 (CLUHP3) from Homo sapiens (Human).